The sequence spans 188 residues: Peptidyl-tRNA hydrolase (188 aa).

Tyrosine 14 contacts tRNA. Residue histidine 19 is the Proton acceptor of the active site. TRNA is bound by residues tyrosine 60 and asparagine 62.

The protein belongs to the PTH family. Monomer.

It localises to the cytoplasm. It carries out the reaction an N-acyl-L-alpha-aminoacyl-tRNA + H2O = an N-acyl-L-amino acid + a tRNA + H(+). Functionally, hydrolyzes ribosome-free peptidyl-tRNAs (with 1 or more amino acids incorporated), which drop off the ribosome during protein synthesis, or as a result of ribosome stalling. In terms of biological role, catalyzes the release of premature peptidyl moieties from peptidyl-tRNA molecules trapped in stalled 50S ribosomal subunits, and thus maintains levels of free tRNAs and 50S ribosomes. This chain is Peptidyl-tRNA hydrolase, found in Mycoplasmopsis agalactiae (strain NCTC 10123 / CIP 59.7 / PG2) (Mycoplasma agalactiae).